The following is a 13477-amino-acid chain: Mucin-3B (13477 aa).

The first 21 residues, M1–G21, serve as a signal peptide directing secretion. Over residues T219–T234 the composition is skewed to low complexity. 106 disordered regions span residues T219–P243, T327–D347, G360–T383, S513–L559, A622–S643, T815–G839, T923–E968, P1154–L1179, S1480–N1511, S1529–T1601, M1619–M1638, T1692–M1714, T1944–S1968, T2064–S2123, S2170–I2197, S2275–T2308, R2442–S2462, L2476–T2497, S2509–T2537, S2591–S2610, T2672–S2717, T2812–T2832, T2845–E2867, S2922–I2947, E3074–I3109, T3309–S3395, I3420–T3481, S3545–S3565, S3654–A3727, I3740–E3812, T4014–T4047, T4067–P4106, T4182–T4249, N4269–T4313, S4510–T4530, T4557–S4617, Y4630–S4651, T4802–G4830, H4953–S4986, Y5128–T5203, I5455–T5486, T5627–K5680, T5834–P5908, S5957–S5977, H5990–T6017, T6030–F6080, T6120–S6150, T6172–P6197, T6456–P6481, T6541–S6598, T6846–T6867, I6946–H6971, T6999–S7021, T7067–P7093, T7170–I7206, S7225–S7244, F7299–S7329, S7400–P7433, T7476–T7532, T7578–H7600, T7731–K7766, S7922–F7996, T8036–S8066, T8088–P8113, T8372–P8397, T8457–S8514, T8762–T8783, I8862–H8887, T8915–P8941, T8983–P9009, A9052–I9122, S9141–S9160, F9215–E9240, T9335–P9366, T9409–T9465, S9566–L9589, T9612–F9674, T9734–T9760, T9828–P9859, T9883–S9908, T9921–I9973, S10076–F10099, I10120–S10166, I10189–S10285, T10389–A10425, T10462–K10481, S10501–S10537, T10640–F10660, T10750–P10828, T10887–S11032, S11044–P11065, T11276–H11317, S11446–T11482, T11566–S11697, T11754–P11779, S11818–P11949, T12067–V12103, P12186–P12220, T12280–I12323, T12364–T12452, E12468–S12578, F12616–T12639, S12681–T12700, I12785–S12805, T12985–T13011, and S13052–T13086. Low complexity-rich tracts occupy residues S513–T538 and T547–L559. Residues T1620–M1638 are compositionally biased toward low complexity. A compositionally biased stretch (polar residues) spans T1944–V1956. The segment covering A1957–S1968 has biased composition (low complexity). Over residues N2066–K2091 the composition is skewed to polar residues. Residues A2096 to S2107 are compositionally biased toward low complexity. The segment covering P2113–S2123 has biased composition (polar residues). Positions S2170 to S2185 are enriched in low complexity. The segment covering Q2186–G2195 has biased composition (polar residues). Composition is skewed to low complexity over residues S2292–T2308 and R2442–T2458. Over residues S2591–S2603 the composition is skewed to low complexity. Composition is skewed to low complexity over residues S2929–S2944 and E3074–S3097. The segment covering P3098–I3109 has biased composition (polar residues). Residues T3309–S3359 show a composition bias toward low complexity. Over residues H3360–A3370 the composition is skewed to polar residues. The span at T3371 to S3385 shows a compositional bias: low complexity. Polar residues predominate over residues I3386–S3395. Over residues I3420 to S3452 the composition is skewed to low complexity. Residues P3453–H3462 show a composition bias toward polar residues. Over residues S3463–T3481 the composition is skewed to low complexity. Positions I3740–G3749 are enriched in polar residues. The segment covering T3750–P3785 has biased composition (low complexity). The span at R3786–E3812 shows a compositional bias: polar residues. 2 stretches are compositionally biased toward low complexity: residues S4020–T4042 and T4067–T4096. The span at A4097–P4106 shows a compositional bias: polar residues. 2 stretches are compositionally biased toward low complexity: residues T4182–T4228 and T4237–T4249. Positions T4557–T4574 are enriched in low complexity. Positions K4575–F4601 are enriched in polar residues. Residues T4602 to S4617 are compositionally biased toward low complexity. The span at T4802–T4827 shows a compositional bias: low complexity. Positions T5137–S5158 are enriched in low complexity. Over residues N5159–E5170 the composition is skewed to polar residues. Composition is skewed to low complexity over residues H5174–T5203 and T5458–T5486. Residues T5834 to S5858 show a composition bias toward low complexity. Polar residues predominate over residues Y5859–P5874. Low complexity predominate over residues S5875 to S5889. Over residues N5890–E5901 the composition is skewed to polar residues. The segment covering S6045 to S6059 has biased composition (low complexity). The span at N6060 to E6071 shows a compositional bias: polar residues. The span at T6172–S6185 shows a compositional bias: low complexity. The span at I6186–P6197 shows a compositional bias: polar residues. Positions T6456–S6475 are enriched in low complexity. The span at H6852–T6867 shows a compositional bias: polar residues. Residues I6946–T6965 show a composition bias toward low complexity. The segment covering T6999 to E7018 has biased composition (polar residues). Residues T7172–I7206 show a composition bias toward low complexity. 2 stretches are compositionally biased toward low complexity: residues T7300–S7329 and S7400–T7427. The segment covering T7476–N7491 has biased composition (polar residues). A compositionally biased stretch (low complexity) spans S7492–T7532. Composition is skewed to low complexity over residues T7734–K7766 and S7922–S7944. Residues Y7945 to E7987 show a composition bias toward polar residues. The segment covering T8088–S8101 has biased composition (low complexity). Residues I8102–P8113 show a composition bias toward polar residues. Positions T8372 to S8391 are enriched in low complexity. Residues H8768–T8783 show a composition bias toward polar residues. Positions I8862–T8881 are enriched in low complexity. The span at T8915–E8934 shows a compositional bias: polar residues. Low complexity-rich tracts occupy residues P9067 to S9081 and T9088 to I9122. The segment covering T9335–T9360 has biased composition (low complexity). The span at T9409–N9424 shows a compositional bias: polar residues. Composition is skewed to low complexity over residues S9425–T9465, S9566–S9585, and T9612–T9624. The span at S9625 to I9661 shows a compositional bias: polar residues. Positions T9662–F9674 are enriched in low complexity. 2 stretches are compositionally biased toward polar residues: residues N9892–E9903 and T9921–I9933. Residues T9934 to I9973 show a composition bias toward low complexity. The span at I10120–T10130 shows a compositional bias: low complexity. The segment covering P10131 to S10166 has biased composition (polar residues). Composition is skewed to low complexity over residues H10196–S10271 and T10394–S10421. Residues T10750–H10791 show a composition bias toward polar residues. 3 stretches are compositionally biased toward low complexity: residues S10792–P10828, T10887–T10937, and P10950–S11032. Over residues T11278–S11291 the composition is skewed to low complexity. A compositionally biased stretch (polar residues) spans I11292 to H11317. Over residues T11566 to S11682 the composition is skewed to low complexity. 2 stretches are compositionally biased toward polar residues: residues N11683 to S11697 and T11754 to A11769. Composition is skewed to low complexity over residues S11770–P11779 and S11818–T11880. Polar residues-rich tracts occupy residues P11881–S11896 and L11903–H11912. Low complexity-rich tracts occupy residues S11913–P11949 and T12067–I12091. Polar residues predominate over residues A12092–V12103. Over residues T12280–S12309 the composition is skewed to low complexity. A compositionally biased stretch (polar residues) spans A12310 to I12323. Positions T12364–S12412 are enriched in low complexity. Polar residues predominate over residues I12413–H12439. Low complexity predominate over residues T12440–T12452. A compositionally biased stretch (polar residues) spans E12468 to L12477. 6 stretches are compositionally biased toward low complexity: residues T12478 to P12569, T12624 to T12639, S12681 to S12692, Q12794 to S12805, P12990 to S13003, and T13073 to T13086. Residues S13130–E13163 enclose the EGF-like domain. Cystine bridges form between C13134–C13140 and C13153–C13162. The 126-residue stretch at D13172–K13297 folds into the SEA domain. A helical transmembrane segment spans residues L13381–V13401.

Highly O-glycosylated and probably also N-glycosylated. In terms of tissue distribution, fetal and adult small intestine and fetal and adult colon.

It is found in the membrane. In terms of biological role, major glycoprotein component of a variety of mucus gels. Thought to provide a protective, lubricating barrier against particles and infectious agents at mucosal surfaces. The chain is Mucin-3B from Homo sapiens (Human).